We begin with the raw amino-acid sequence, 743 residues long: 1,4-alpha-glucan branching enzyme GlgB (743 aa).

Aspartate 416 functions as the Nucleophile in the catalytic mechanism. Residue glutamate 469 is the Proton donor of the active site.

It belongs to the glycosyl hydrolase 13 family. GlgB subfamily. In terms of assembly, monomer.

The catalysed reaction is Transfers a segment of a (1-&gt;4)-alpha-D-glucan chain to a primary hydroxy group in a similar glucan chain.. It functions in the pathway glycan biosynthesis; glycogen biosynthesis. Its function is as follows. Catalyzes the formation of the alpha-1,6-glucosidic linkages in glycogen by scission of a 1,4-alpha-linked oligosaccharide from growing alpha-1,4-glucan chains and the subsequent attachment of the oligosaccharide to the alpha-1,6 position. This is 1,4-alpha-glucan branching enzyme GlgB from Shewanella baltica (strain OS195).